A 298-amino-acid polypeptide reads, in one-letter code: Large ribosomal subunit protein uL18 (298 aa).

It belongs to the universal ribosomal protein uL18 family. Component of the large ribosomal subunit. Mature ribosomes consist of a small (40S) and a large (60S) subunit. The 40S subunit contains about 32 different proteins and 1 molecule of RNA (18S). The 60S subunit contains 45 different proteins and 3 molecules of RNA (25S, 5.8S and 5S).

The protein localises to the cytoplasm. Component of the ribosome, a large ribonucleoprotein complex responsible for the synthesis of proteins in the cell. The small ribosomal subunit (SSU) binds messenger RNAs (mRNAs) and translates the encoded message by selecting cognate aminoacyl-transfer RNA (tRNA) molecules. The large subunit (LSU) contains the ribosomal catalytic site termed the peptidyl transferase center (PTC), which catalyzes the formation of peptide bonds, thereby polymerizing the amino acids delivered by tRNAs into a polypeptide chain. The nascent polypeptides leave the ribosome through a tunnel in the LSU and interact with protein factors that function in enzymatic processing, targeting, and the membrane insertion of nascent chains at the exit of the ribosomal tunnel. This Candida albicans (strain SC5314 / ATCC MYA-2876) (Yeast) protein is Large ribosomal subunit protein uL18.